Here is a 447-residue protein sequence, read N- to C-terminus: MTKRKKRAAINLTRLPIEYIDWLSRPIYRFIHIESAAGIVLFISTLLAVLLANSHLSEEFARFWQISLGMTVGDLVFERSLHKWVNDAGMTLFFFLIALELKRELVLGELRNPQLALLSIAAALGGMSTPPLFYLLLQYGESGQHGWGTVMATDTAFVIGCLALLGRSIPSSLRIFMLSMAVVDDIGAIFVVAIGYGEAVDWLVLSYALLGFMLVRAMAFLGVRSLVLFSIVGGAIWLVIDMSGVHPTITGVILGLLTPTNKWMSRQHLFIIMEALVPSSPSQQWSGDKREGEILKTAAAAARETLSPVERLEMLLHPWVGFVVLPLFALANAGVSLTSVNLTSPITLAVFVGFVFGKPIGIVLFSWIAVWLGIAKLPENLNWGMVFGGGMLAGIGFTMALFISELAYNPDQINAAKLGIFIASITSALIGFLCLRYFAAREKQKRT.

The next 11 membrane-spanning stretches (helical) occupy residues 30–50, 81–101, 117–137, 146–166, 175–195, 199–219, 220–240, 315–335, 350–370, 383–403, and 415–435; these read FIHI…LAVL, LHKW…ALEL, LLSI…YLLL, GWGT…ALLG, IFML…VAIG, AVDW…RAMA, FLGV…WLVI, LLHP…NAGV, VFVG…WIAV, WGMV…ALFI, and AAKL…FLCL.

Belongs to the NhaA Na(+)/H(+) (TC 2.A.33) antiporter family.

The protein resides in the cell inner membrane. The catalysed reaction is Na(+)(in) + 2 H(+)(out) = Na(+)(out) + 2 H(+)(in). Its function is as follows. Na(+)/H(+) antiporter that extrudes sodium in exchange for external protons. This Vibrio vulnificus (strain CMCP6) protein is Na(+)/H(+) antiporter NhaA 2.